Here is a 436-residue protein sequence, read N- to C-terminus: 3-ketoacyl-CoA thiolase (436 aa).

Cysteine 99 serves as the catalytic Acyl-thioester intermediate. Active-site proton acceptor residues include histidine 392 and cysteine 422.

Belongs to the thiolase-like superfamily. Thiolase family. In terms of assembly, heterotetramer of two alpha chains (FadJ) and two beta chains (FadI).

It is found in the cytoplasm. It carries out the reaction an acyl-CoA + acetyl-CoA = a 3-oxoacyl-CoA + CoA. Its pathway is lipid metabolism; fatty acid beta-oxidation. Functionally, catalyzes the final step of fatty acid oxidation in which acetyl-CoA is released and the CoA ester of a fatty acid two carbons shorter is formed. This is 3-ketoacyl-CoA thiolase from Shewanella oneidensis (strain ATCC 700550 / JCM 31522 / CIP 106686 / LMG 19005 / NCIMB 14063 / MR-1).